We begin with the raw amino-acid sequence, 390 residues long: Phosphopentomutase (390 aa).

Mn(2+)-binding residues include D11, D283, H288, D324, H325, and H336.

The protein belongs to the phosphopentomutase family. Mn(2+) serves as cofactor.

The protein localises to the cytoplasm. The catalysed reaction is 2-deoxy-alpha-D-ribose 1-phosphate = 2-deoxy-D-ribose 5-phosphate. It carries out the reaction alpha-D-ribose 1-phosphate = D-ribose 5-phosphate. It functions in the pathway carbohydrate degradation; 2-deoxy-D-ribose 1-phosphate degradation; D-glyceraldehyde 3-phosphate and acetaldehyde from 2-deoxy-alpha-D-ribose 1-phosphate: step 1/2. Isomerase that catalyzes the conversion of deoxy-ribose 1-phosphate (dRib-1-P) and ribose 1-phosphate (Rib-1-P) to deoxy-ribose 5-phosphate (dRib-5-P) and ribose 5-phosphate (Rib-5-P), respectively. The polypeptide is Phosphopentomutase (Clostridium acetobutylicum (strain ATCC 824 / DSM 792 / JCM 1419 / IAM 19013 / LMG 5710 / NBRC 13948 / NRRL B-527 / VKM B-1787 / 2291 / W)).